A 102-amino-acid chain; its full sequence is MAKEKIRIRLKAYDHRILDQSAEKIVDTAKRSGAKVSGPIPLPTEKSVYTVLRAVHKYKDSREQFEMRTHKRLIDILEPTPKTVDALMRLDLPSGVDIEIKL.

This sequence belongs to the universal ribosomal protein uS10 family. As to quaternary structure, part of the 30S ribosomal subunit.

Functionally, involved in the binding of tRNA to the ribosomes. The chain is Small ribosomal subunit protein uS10 from Oceanobacillus iheyensis (strain DSM 14371 / CIP 107618 / JCM 11309 / KCTC 3954 / HTE831).